The sequence spans 439 residues: 23S rRNA (uracil(1939)-C(5))-methyltransferase RlmD (439 aa).

Residues 10–69 enclose the TRAM domain; it reads KTQLNTRHQAVQVERLDHHGAGIAYLKKKPLFIDGALPGEEVVTQLVEEKSKFARGKLIK. Residues Cys-82, Cys-88, Cys-91, and Cys-169 each contribute to the [4Fe-4S] cluster site. S-adenosyl-L-methionine contacts are provided by Gln-272, Phe-301, Asn-306, Glu-322, Asn-349, and Asp-370. Cys-396 functions as the Nucleophile in the catalytic mechanism.

It belongs to the class I-like SAM-binding methyltransferase superfamily. RNA M5U methyltransferase family. RlmD subfamily.

The enzyme catalyses uridine(1939) in 23S rRNA + S-adenosyl-L-methionine = 5-methyluridine(1939) in 23S rRNA + S-adenosyl-L-homocysteine + H(+). Functionally, catalyzes the formation of 5-methyl-uridine at position 1939 (m5U1939) in 23S rRNA. This chain is 23S rRNA (uracil(1939)-C(5))-methyltransferase RlmD, found in Vibrio parahaemolyticus serotype O3:K6 (strain RIMD 2210633).